The sequence spans 518 residues: Nicotine N-demethylase CYP82E3 (518 aa).

Residues 2 to 22 (VFPVEAIVGLVTFTFLFYFLW) traverse the membrane as a helical segment. A Glycyl lysine isopeptide (Lys-Gly) (interchain with G-Cter in ubiquitin) cross-link involves residue Lys254. Cys458 is a binding site for heme.

Belongs to the cytochrome P450 family. CYP82E2 subfamily. The cofactor is heme. Expressed in leaves.

The protein localises to the membrane. It carries out the reaction (S)-nicotine + reduced [NADPH--hemoprotein reductase] + O2 = (S)-nornicotine + formaldehyde + oxidized [NADPH--hemoprotein reductase] + H2O + H(+). It functions in the pathway alkaloid biosynthesis; nicotine biosynthesis. Its function is as follows. Involved in the biosynthesis of pyridine alkaloid natural products, leading mainly to the production of anabasine, anatabine, nicotine and nornicotine, effective deterrents against herbivores with antiparasitic and pesticide properties (neurotoxins); nornicotine serves as the precursor in the synthesis of the carcinogen compound N'-nitrosonornicotine (NNN). Catalyzes the demethylation of nicotine to form nornicotine. In Nicotiana tomentosiformis (Tobacco), this protein is Nicotine N-demethylase CYP82E3.